A 526-amino-acid polypeptide reads, in one-letter code: Vitamin B6 transporter bsu1 (526 aa).

The segment at 1–53 is disordered; that stretch reads MASKIASLFSPSETASKDQHENVAEDLELGTASSQSDGIHETNSEYDEKKREE. Residues 38 to 53 show a composition bias toward basic and acidic residues; the sequence is GIHETNSEYDEKKREE. The next 12 helical transmembrane spans lie at 81–101, 118–138, 147–167, 173–192, 204–224, 238–257, 314–330, 349–366, 387–407, 413–432, 444–461, and 480–501; these read WSIVFMFCLMQIYVIWTSNGF, VATLCLSMNILGSGLGPMFLG, KPVYFCSIFVYTVFNISCALP, MIISHFIIGVAGSTALTNVA, AGVPMSLFVWACAGGAIGAPM, WLYYINIIVGGFFLIVILII, LYNFYAYGISYFFLTAI, YLSGFVASTLLFLYQPIQ, FTSALFITLLFPAGMFLFAFT, PWMSPIVGNSMVTVANGHNW, PLLSGSAVAAFTLPSFIG, and WAVATMAFISISIPFIIYTFYF.

Belongs to the major facilitator superfamily. CAR1 family.

It localises to the membrane. Functionally, thiamine-regulated, high affinity import carrier of pyridoxine, pyridoxal and pyridoxamine. Also imports, but does not export, amiloride and so confers sensitivity. This Schizosaccharomyces pombe (strain 972 / ATCC 24843) (Fission yeast) protein is Vitamin B6 transporter bsu1 (bsu1).